Reading from the N-terminus, the 121-residue chain is NADH-quinone oxidoreductase subunit 7 (121 aa).

The next 3 membrane-spanning stretches (helical) occupy residues 11-31 (ILVFLGMASALAIVLILAAAV), 65-85 (LVSILFIIFDLEVAFLFPWAV), and 93-113 (VAFWGLMVFLAVLTVGFAYEW).

It belongs to the complex I subunit 3 family. In terms of assembly, NDH-1 is composed of at least 14 different subunits, Nqo1 to Nqo14. The complex has a L-shaped structure, with the hydrophobic arm (subunits Nqo7, Nqo8, Nqo10 to Nqo14) embedded in the inner membrane and the hydrophilic peripheral arm (subunits Nqo1 to Nqo6, Nqo9) protruding into the bacterial cytoplasm. The hydrophilic domain contains all the redox centers.

It is found in the cell inner membrane. It catalyses the reaction a quinone + NADH + 5 H(+)(in) = a quinol + NAD(+) + 4 H(+)(out). Functionally, NDH-1 shuttles electrons from NADH, via FMN and iron-sulfur (Fe-S) centers, to quinones in the respiratory chain. The immediate electron acceptor for the enzyme in this species is believed to be ubiquinone. Couples the redox reaction to proton translocation (for every two electrons transferred, four hydrogen ions are translocated across the cytoplasmic membrane), and thus conserves the redox energy in a proton gradient. The chain is NADH-quinone oxidoreductase subunit 7 (nqo7) from Paracoccus denitrificans.